We begin with the raw amino-acid sequence, 1203 residues long: Partitioning defective 3 homolog B (1203 aa).

Disordered regions lie at residues 79 to 104 (FDEQEPLQKTESPGGNPADRQSPDAF) and 138 to 162 (RRSSDPAPGPHADAQPSTASLSGQS). S100 bears the Phosphoserine mark. Residues 152-162 (QPSTASLSGQS) are compositionally biased toward polar residues. In terms of domain architecture, PDZ 1 spans 201–289 (TRAVEISGEG…SPSVILHVLL (89 aa)). The tract at residues 334–374 (TRASSPEGEEPASPQQSKSPRVPRLGRKPSSPSLSPLMGFG) is disordered. A phosphoserine mark is found at S346, S352, and S368. 2 PDZ domains span residues 383–468 (KIDL…VIAR) and 496–585 (TLEI…GMIQ). 7 positions are modified to phosphoserine: S635, S710, S728, S730, S746, S749, and S801. The segment covering 718–732 (GKVQSLADRRSDSPG) has biased composition (basic and acidic residues). Residues 718–743 (GKVQSLADRRSDSPGKDFGPTLGLKK) are disordered. Disordered stretches follow at residues 787–927 (KSYD…EKQA), 968–994 (VFRSPSPLRAGPLAYPRDGRPLSPDHL), and 1050–1203 (RPSD…TAAV). Residue T810 is modified to Phosphothreonine. The span at 827 to 842 (VENKAKNIKKTKEKEK) shows a compositional bias: basic and acidic residues. Over residues 843–854 (KKGKGKLKVKEK) the composition is skewed to basic residues. Basic and acidic residues-rich tracts occupy residues 855-865 (KLKEEHEDAER), 881-893 (KKDDKVGKAEQKG), 906-927 (ERMKEERERIGAKHQELREKQA), and 984-994 (RDGRPLSPDHL). A phosphoserine mark is found at S1088 and S1182.

This sequence belongs to the PAR3 family. As to quaternary structure, interacts with PARD6B. Interacts with INSC/inscuteable.

It is found in the endomembrane system. It localises to the cell junction. The protein localises to the tight junction. In terms of biological role, putative adapter protein involved in asymmetrical cell division and cell polarization processes. May play a role in the formation of epithelial tight junctions. The polypeptide is Partitioning defective 3 homolog B (Pard3b) (Mus musculus (Mouse)).